The following is a 298-amino-acid chain: Pyruvate synthase subunit PorB (298 aa).

Residues C19, C22, C47, and C218 each contribute to the [4Fe-4S] cluster site.

As to quaternary structure, heterotetramer of one alpha, one beta, one delta and one gamma chain. The cofactor is [4Fe-4S] cluster.

The catalysed reaction is 2 oxidized [2Fe-2S]-[ferredoxin] + pyruvate + CoA = 2 reduced [2Fe-2S]-[ferredoxin] + acetyl-CoA + CO2 + H(+). This chain is Pyruvate synthase subunit PorB (porB), found in Methanocaldococcus jannaschii (strain ATCC 43067 / DSM 2661 / JAL-1 / JCM 10045 / NBRC 100440) (Methanococcus jannaschii).